The sequence spans 344 residues: Cell cycle control protein 50C (344 aa).

Residues 1–34 (MEETPQHCLSRLPDNSALKQQELPAHRLYFTARR) are Cytoplasmic-facing. A helical membrane pass occupies residues 35–55 (VLFVFFTTGIFCLCMGIILIL). The Extracellular segment spans residues 56-306 (SARSTQEIEI…STLTWCGGNS (251 aa)). N-linked (GlcNAc...) asparagine glycans are attached at residues N66 and N261. The chain crosses the membrane as a helical span at residues 307 to 327 (LFLGLAYTVTGAITWLASFTM). Over 328–344 (MAIHITLKNKQMSFFHQ) the chain is Cytoplasmic.

It belongs to the CDC50/LEM3 family. Specifically expressed in testis.

It is found in the membrane. This is Cell cycle control protein 50C (TMEM30C) from Macaca fascicularis (Crab-eating macaque).